Here is a 399-residue protein sequence, read N- to C-terminus: Ras-related GTP-binding protein C (399 aa).

Residues 1-20 (MSLQYGAEETPLAGSYGAAD) form a disordered region. Position 2 is an N-acetylserine (S2). 2 positions are modified to phosphoserine: S2 and S15. Residues R71, S72, G73, K74, S75, S76, T90, E94, T96, H178, K179, D181, S219, and I220 each coordinate GDP. K74 is a GTP binding site. T90 provides a ligand contact to GTP. Residue T96 coordinates GTP. T96 is modified (phosphothreonine). D181 is a GTP binding site.

Belongs to the GTR/RAG GTP-binding protein family. Forms a heterodimer with RRAGA, in a sequence-independent manner, and RRAGB. Heterodimerization stabilizes proteins of the heterodimer. The GDP-bound form of RRAGC (in complex with the GTP-bound form of RRAGA or RRAGB), interacts with RPTOR, thereby promoting recruitment of mTORC1 to the lysosomes. Component of the lysosomal folliculin complex (LFC), composed of FLCN, FNIP1 (or FNIP2), RagA/RRAGA or RagB/RRAGB GDP-bound, RagC/RRAGC or RagD/RRAGD GTP-bound, and Ragulator. Interacts with NOL8. Interacts with SH3BP4; the interaction with this negative regulator is most probably direct, preferentially occurs with the inactive GDP-bound form of RRAGB, is negatively regulated by amino acids and prevents interaction with RPTOR. The Rag heterodimer interacts with SLC38A9; the probable amino acid sensor. Interacts with SESN1, SESN2 and SESN3. Interacts with PIP4P1. The Rag heterodimer interacts with the Ragulator complex. The GDP-bound form interacts with TFEB. The GDP-bound form interacts with TFE3.

Its subcellular location is the cytoplasm. It localises to the nucleus. The protein localises to the lysosome membrane. The catalysed reaction is GTP + H2O = GDP + phosphate + H(+). Its activity is regulated as follows. The activation of RagC/RRAGC is mediated by a GTPase activating protein (GAP). In high-amino acid conditions, activated by GTPase activating protein FLCN that stimulates RRAGC GTPase activity to turn it into its active GDP-bound form. In response to amino acid depletion, the GATOR1 complex inactivates RagC/RRAGC by securing the GTP-bound inactive form. In terms of biological role, guanine nucleotide-binding protein that plays a crucial role in the cellular response to amino acid availability through regulation of the mTORC1 signaling cascade. Forms heterodimeric Rag complexes with RagA/RRAGA or RagB/RRAGB and cycles between an inactive GTP-bound and an active GDP-bound form: RagC/RRAGC is in its active form when GDP-bound RagC/RRAGC forms a complex with GTP-bound RagA/RRAGA (or RagB/RRAGB) and in an inactive form when GTP-bound RagC/RRAGC heterodimerizes with GDP-bound RagA/RRAGA (or RagB/RRAGB). In its GDP-bound active form, promotes the recruitment of mTORC1 to the lysosomes and its subsequent activation by the GTPase RHEB. This is a crucial step in the activation of the MTOR signaling cascade by amino acids. Also plays a central role in the non-canonical mTORC1 complex, which acts independently of RHEB and specifically mediates phosphorylation of MiT/TFE factors TFEB and TFE3: GDP-bound RagC/RRAGC mediates recruitment of MiT/TFE factors TFEB and TFE3. The protein is Ras-related GTP-binding protein C of Homo sapiens (Human).